The following is a 171-amino-acid chain: 3-hydroxydecanoyl-[acyl-carrier-protein] dehydratase (171 aa).

The active site involves histidine 70.

This sequence belongs to the thioester dehydratase family. FabA subfamily. As to quaternary structure, homodimer.

It is found in the cytoplasm. It catalyses the reaction a (3R)-hydroxyacyl-[ACP] = a (2E)-enoyl-[ACP] + H2O. The catalysed reaction is (3R)-hydroxydecanoyl-[ACP] = (2E)-decenoyl-[ACP] + H2O. The enzyme catalyses (2E)-decenoyl-[ACP] = (3Z)-decenoyl-[ACP]. The protein operates within lipid metabolism; fatty acid biosynthesis. Necessary for the introduction of cis unsaturation into fatty acids. Catalyzes the dehydration of (3R)-3-hydroxydecanoyl-ACP to E-(2)-decenoyl-ACP and then its isomerization to Z-(3)-decenoyl-ACP. Can catalyze the dehydratase reaction for beta-hydroxyacyl-ACPs with saturated chain lengths up to 16:0, being most active on intermediate chain length. In Pseudomonas putida (strain ATCC 700007 / DSM 6899 / JCM 31910 / BCRC 17059 / LMG 24140 / F1), this protein is 3-hydroxydecanoyl-[acyl-carrier-protein] dehydratase.